Reading from the N-terminus, the 295-residue chain is Putative attaching and effacing protein homolog (295 aa).

The first 25 residues, 1 to 25 (MSHYKTGHKQPRFRYSVLARCVAWA), serve as a signal peptide directing secretion.

It belongs to the intimin/invasin family.

The polypeptide is Putative attaching and effacing protein homolog (eaeH) (Escherichia coli (strain K12)).